The sequence spans 424 residues: MAKNIQAIRGMNDYLPGETAIWQRIEGTLKNVLGSYGYSEIRLPIVEQTPLFKRAIGEVTDVVEKEMYTFEDRNGDSLTLRPEGTAGCVRAGIEHGLLYNQEQRLWYIGPMFRHERPQKGRYRQFHQLGCEVFGLQGPDIDAELIMLTARWWRALGISEHVTLELNSIGSLEARANYRDALVAFLEQHKEKLDEDCKRRMYTNPLRVLDSKNPEVQALLNDAPALGDYLDEESREHFAGLCKLLESAGIAYTVNQRLVRGLDYYNRTVFEWVTNSLGSQGTVCAGGRYDGLVEQLGGRATPAVGFAMGLERLVLLVQAVNPEFKADPIVDIYLVASGADTQSAAMALAERLRDELQGVKLMTNHGGGNFKKQFARADKWGARVAVVLGESEVTNGTAVVKDLRSGEQTAVAQDSVAAHLRTLLG.

Belongs to the class-II aminoacyl-tRNA synthetase family. In terms of assembly, homodimer.

The protein localises to the cytoplasm. The catalysed reaction is tRNA(His) + L-histidine + ATP = L-histidyl-tRNA(His) + AMP + diphosphate + H(+). The sequence is that of Histidine--tRNA ligase from Shigella boydii serotype 18 (strain CDC 3083-94 / BS512).